The following is a 565-amino-acid chain: MTKIDLLVKNAHVFNVYLRKFEDVNITIKDGKFYWINKELPGIEAAKVIDLQGKYVIPGFVDAHMHIDSSMTTPKVMGQTIGKYGTTTIIADDHEITNVAGVKGLKDFIDEKAPIDIFFGIPSSVPSTNPNMETTGGLIGVKETEELLKDPRFVCLGEVMNFKDMTSDHDTLIKKIIAACRKARPTMPLEGHVPAYHSEDLAKVIYAGITTDHTQQTSSLVDEKIRSGMFVEIQLKSMHQEVIDTVIEHGYFEHVALVTDDSMPDTLLKGHLNLLVKKAIDMGMRPEDAIYISTYTPARHMGLWDRGAIAPGRVADFIVLNNLEDLSIAQVYKNGLPFAAKDEKDNNVYPEELLHSVKAPKLSEADFDLKTDLVQNGKVVANIIQINEVGTFTNHIQKCLEVKDGHVQWKKAGLALMLCQERYGKNEGRYAFALIDRGIVGDGAIGATWAHDHHNLIILGTNIAGMVSVQNLLVEEQGGYIAAKGSQIVANAPLPLGGVVSLEPMSVLGKQISKVRETMVDLGYKNTNEIMSFSTLSLLVSPTLKISDKGIFEVKTQRHIPLFEC.

The protein belongs to the metallo-dependent hydrolases superfamily. Adenine deaminase family. Requires Mn(2+) as cofactor.

The catalysed reaction is adenine + H2O + H(+) = hypoxanthine + NH4(+). In Lactobacillus delbrueckii subsp. bulgaricus (strain ATCC 11842 / DSM 20081 / BCRC 10696 / JCM 1002 / NBRC 13953 / NCIMB 11778 / NCTC 12712 / WDCM 00102 / Lb 14), this protein is Adenine deaminase.